A 1373-amino-acid chain; its full sequence is Inactive tyrosine-protein kinase PRAG1 (1373 aa).

Disordered regions lie at residues 31 to 50 (AGHP…LPAR) and 197 to 235 (TSSC…DSEG). Phosphotyrosine is present on Tyr-238. Composition is skewed to basic and acidic residues over residues 250–263 (DAVH…RRGG) and 272–284 (QGPR…EEKQ). A disordered region spans residues 250-338 (DAVHSTEGSG…SGASSPFAPH (89 aa)). The segment covering 317–333 (SSSDGLSCGSSRSGASS) has biased composition (low complexity). 2 positions are modified to phosphotyrosine: Tyr-343 and Tyr-391. Disordered regions lie at residues 376-448 (QPAS…NPAP) and 468-794 (IYLS…LPQK). The span at 419–438 (SQGQVWTGDTWIQKTPPSWS) shows a compositional bias: polar residues. The span at 506–522 (RESHPHNVTENTAKEKP) shows a compositional bias: basic and acidic residues. Over residues 526-538 (PKLSKSSPGGSPV) the composition is skewed to low complexity. Composition is skewed to polar residues over residues 568–578 (NLTSSCHTNGV) and 655–670 (TSGQ…SKSA). A phosphoserine mark is found at Ser-671 and Ser-720. 2 stretches are compositionally biased toward polar residues: residues 711-721 (VSQSSAESLSP) and 729-740 (SFTTGSTDSLAS). Residues Ser-757 and Ser-802 each carry the phosphoserine modification. Residues 804 to 823 (PDGFFWTQGSPKPRTASPKL) form a disordered region. Residues 911–954 (STQLQLHSLLSSISSKEGTYAKLGGLYTQSLARLVTKCEDLFMG) are required for homodimerization. In terms of domain architecture, Protein kinase spans 945–1296 (VTKCEDLFMG…EAKRVLQCLL (352 aa)). Residues 1041–1050 (LASPDTSSKD) are compositionally biased toward polar residues. Disordered regions lie at residues 1041-1062 (LASP…PPAQ) and 1138-1171 (QSSP…QGGP). The segment covering 1139–1167 (SSPGPSATPTVPTTTSRCPSAAPAATTAC) has biased composition (low complexity). Residues 1298-1373 (GPRRELVEQP…LQSLKLLQLL (76 aa)) form a required for homodimerization region.

This sequence belongs to the protein kinase superfamily. Homodimer. Dimerization leads to the catalytic activation of CSK. Interacts (via C-terminus) with RND2. Interacts with CSK (via SH2 domain) in a Tyr-391 phosphorylation-dependent manner; this interaction potentiates kinase activity of CSK. Interacts with NOTCH1 intracellular domain (N1ICD). Forms a complex with PRAG1, N1ICD and MAML1, in a MAML1-dependent manner. In terms of processing, phosphorylated by CSK on Tyr-238, Tyr-343, and Tyr-391; Tyr-391 is a primary site of phosphorylation.

It is found in the cytoplasm. It localises to the nucleus. Its subcellular location is the cell junction. The protein localises to the focal adhesion. Its function is as follows. Catalytically inactive protein kinase that acts as a scaffold protein. Functions as an effector of the small GTPase RND2, which stimulates RhoA activity and inhibits NGF-induced neurite outgrowth. Promotes Src family kinase (SFK) signaling by regulating the subcellular localization of CSK, a negative regulator of these kinases, leading to the regulation of cell morphology and motility by a CSK-dependent mechanism. Acts as a critical coactivator of Notch signaling. This is Inactive tyrosine-protein kinase PRAG1 from Mus musculus (Mouse).